The chain runs to 329 residues: Tryptophan--tRNA ligase (329 aa).

ATP is bound by residues 9-11 (QPS) and 17-18 (GN). The 'HIGH' region motif lies at 10–18 (PSGIPTIGN). An L-tryptophan-binding site is contributed by aspartate 133. ATP-binding positions include 145–147 (GDD), valine 184, and 193–197 (KMSKS). A 'KMSKS' region motif is present at residues 193-197 (KMSKS).

This sequence belongs to the class-I aminoacyl-tRNA synthetase family. Homodimer.

The protein resides in the cytoplasm. The catalysed reaction is tRNA(Trp) + L-tryptophan + ATP = L-tryptophyl-tRNA(Trp) + AMP + diphosphate + H(+). Functionally, catalyzes the attachment of tryptophan to tRNA(Trp). This chain is Tryptophan--tRNA ligase, found in Staphylococcus aureus (strain MSSA476).